Here is a 163-residue protein sequence, read N- to C-terminus: Endoribonuclease YbeY (163 aa).

Zn(2+) is bound by residues H126, H130, and H136.

The protein belongs to the endoribonuclease YbeY family. It depends on Zn(2+) as a cofactor.

The protein localises to the cytoplasm. Functionally, single strand-specific metallo-endoribonuclease involved in late-stage 70S ribosome quality control and in maturation of the 3' terminus of the 16S rRNA. The polypeptide is Endoribonuclease YbeY (Chelativorans sp. (strain BNC1)).